A 648-amino-acid polypeptide reads, in one-letter code: DNA gyrase subunit B (648 aa).

A Toprim domain is found at 427 to 541 (TELFIVEGDS…AGYVYIAQPP (115 aa)). E433, D506, and D508 together coordinate Mg(2+).

Belongs to the type II topoisomerase GyrB family. As to quaternary structure, heterotetramer, composed of two GyrA and two GyrB chains. In the heterotetramer, GyrA contains the active site tyrosine that forms a transient covalent intermediate with DNA, while GyrB binds cofactors and catalyzes ATP hydrolysis. Requires Mg(2+) as cofactor. Mn(2+) is required as a cofactor. It depends on Ca(2+) as a cofactor.

The protein localises to the cytoplasm. The catalysed reaction is ATP-dependent breakage, passage and rejoining of double-stranded DNA.. Its function is as follows. A type II topoisomerase that negatively supercoils closed circular double-stranded (ds) DNA in an ATP-dependent manner to modulate DNA topology and maintain chromosomes in an underwound state. Negative supercoiling favors strand separation, and DNA replication, transcription, recombination and repair, all of which involve strand separation. Also able to catalyze the interconversion of other topological isomers of dsDNA rings, including catenanes and knotted rings. Type II topoisomerases break and join 2 DNA strands simultaneously in an ATP-dependent manner. The chain is DNA gyrase subunit B from Streptococcus pneumoniae serotype 4 (strain ATCC BAA-334 / TIGR4).